Here is a 138-residue protein sequence, read N- to C-terminus: Small ribosomal subunit protein bS6 (138 aa).

Positions 100 to 138 (SPLAKGREEDDSDSSARRARDDSDDDGDDDEDDRRASAD) are disordered. A compositionally biased stretch (acidic residues) spans 121 to 131 (DSDDDGDDDED).

This sequence belongs to the bacterial ribosomal protein bS6 family.

In terms of biological role, binds together with bS18 to 16S ribosomal RNA. The chain is Small ribosomal subunit protein bS6 from Thioalkalivibrio sulfidiphilus (strain HL-EbGR7).